Here is a 348-residue protein sequence, read N- to C-terminus: Benzoate 1,2-dioxygenase electron transfer component (348 aa).

In terms of domain architecture, 2Fe-2S ferredoxin-type spans 14–109 (HQVALQFEDG…DAVFQIQASS (96 aa)). [2Fe-2S] cluster contacts are provided by C51, C56, C59, and C93. The interval 111–348 (VCKTKIHHFE…NFLFEKFSAN (238 aa)) is ferredoxin-reductase. In terms of domain architecture, FAD-binding FR-type spans 116-217 (IHHFEGTLAR…TGPFGSFYLR (102 aa)).

It belongs to the bacterial ring-hydroxylating dioxygenase ferredoxin reductase family. As to quaternary structure, this dioxygenase system consists of three proteins: the two subunits of the hydroxylase component (BenA and BenB), and an electron transfer component (BenC). Requires FAD as cofactor. It depends on [2Fe-2S] cluster as a cofactor.

It catalyses the reaction 2 reduced [2Fe-2S]-[ferredoxin] + NAD(+) + H(+) = 2 oxidized [2Fe-2S]-[ferredoxin] + NADH. Its pathway is xenobiotic degradation; toluene degradation. In terms of biological role, electron transfer component of benzoate 1,2-dioxygenase system. The protein is Benzoate 1,2-dioxygenase electron transfer component (benC) of Acinetobacter baylyi (strain ATCC 33305 / BD413 / ADP1).